Consider the following 263-residue polypeptide: HTH-type transcriptional repressor NanR (263 aa).

The disordered stretch occupies residues 1–22; that stretch reads MGLMNAFDSQTEDSSPAIGRNL. Residues 30–98 form the HTH gntR-type domain; that stretch reads KKLSEMVEEE…NGERARVSRP (69 aa). The H-T-H motif DNA-binding region spans 58–77; the sequence is ERELMAFFNVGRPSVREALA.

Belongs to the NanR family.

Its function is as follows. Transcriptional repressor that controls expression of the genes required for the catabolism of sialic acids. The chain is HTH-type transcriptional repressor NanR from Shigella boydii serotype 4 (strain Sb227).